The chain runs to 642 residues: Threonine--tRNA ligase (642 aa).

Residues 1–61 enclose the TGS domain; it reads MPVITLPDGS…ETDSELSIIT (61 aa). Residues 243 to 534 are catalytic; sequence DHRKIGKQLD…LIEEYAGKFP (292 aa). Zn(2+) contacts are provided by cysteine 334, histidine 385, and histidine 511.

It belongs to the class-II aminoacyl-tRNA synthetase family. As to quaternary structure, homodimer. Zn(2+) serves as cofactor.

It localises to the cytoplasm. It carries out the reaction tRNA(Thr) + L-threonine + ATP = L-threonyl-tRNA(Thr) + AMP + diphosphate + H(+). Catalyzes the attachment of threonine to tRNA(Thr) in a two-step reaction: L-threonine is first activated by ATP to form Thr-AMP and then transferred to the acceptor end of tRNA(Thr). Also edits incorrectly charged L-seryl-tRNA(Thr). The polypeptide is Threonine--tRNA ligase (Shewanella halifaxensis (strain HAW-EB4)).